We begin with the raw amino-acid sequence, 305 residues long: Methionyl-tRNA formyltransferase (305 aa).

111–114 (SLLP) lines the (6S)-5,6,7,8-tetrahydrofolate pocket.

The protein belongs to the Fmt family.

The catalysed reaction is L-methionyl-tRNA(fMet) + (6R)-10-formyltetrahydrofolate = N-formyl-L-methionyl-tRNA(fMet) + (6S)-5,6,7,8-tetrahydrofolate + H(+). In terms of biological role, attaches a formyl group to the free amino group of methionyl-tRNA(fMet). The formyl group appears to play a dual role in the initiator identity of N-formylmethionyl-tRNA by promoting its recognition by IF2 and preventing the misappropriation of this tRNA by the elongation apparatus. The protein is Methionyl-tRNA formyltransferase of Campylobacter jejuni (strain RM1221).